The following is a 359-amino-acid chain: Sulfate/thiosulfate import ATP-binding protein CysA (359 aa).

The 235-residue stretch at 3–237 (VRVAGVRKEF…PNSPFVYGFI (235 aa)) folds into the ABC transporter domain. 35–42 (GPSGSGKT) lines the ATP pocket.

The protein belongs to the ABC transporter superfamily. Sulfate/tungstate importer (TC 3.A.1.6) family. The complex is composed of two ATP-binding proteins (CysA), two transmembrane proteins (CysT and CysW) and a solute-binding protein (CysP).

It is found in the cell inner membrane. The enzyme catalyses sulfate(out) + ATP + H2O = sulfate(in) + ADP + phosphate + H(+). It carries out the reaction thiosulfate(out) + ATP + H2O = thiosulfate(in) + ADP + phosphate + H(+). In terms of biological role, part of the ABC transporter complex CysAWTP involved in sulfate/thiosulfate import. Responsible for energy coupling to the transport system. This chain is Sulfate/thiosulfate import ATP-binding protein CysA, found in Brucella melitensis biotype 1 (strain ATCC 23456 / CCUG 17765 / NCTC 10094 / 16M).